The chain runs to 215 residues: Cytochrome b6 (215 aa).

Residues 32–52 (IFHCLGGITLTCFLVQVATGF) form a helical membrane-spanning segment. Cysteine 35 serves as a coordination point for heme c. The heme b site is built by histidine 86 and histidine 100. 3 helical membrane-spanning segments follow: residues 90-110 (ASMM…TGGF), 116-136 (LTWV…VTGY), and 186-206 (LHTF…FSMI). Histidine 187 and histidine 202 together coordinate heme b.

The protein belongs to the cytochrome b family. PetB subfamily. The 4 large subunits of the cytochrome b6-f complex are cytochrome b6, subunit IV (17 kDa polypeptide, PetD), cytochrome f and the Rieske protein, while the 4 small subunits are PetG, PetL, PetM and PetN. The complex functions as a dimer. It depends on heme b as a cofactor. Heme c is required as a cofactor.

The protein localises to the plastid. The protein resides in the chloroplast thylakoid membrane. In terms of biological role, component of the cytochrome b6-f complex, which mediates electron transfer between photosystem II (PSII) and photosystem I (PSI), cyclic electron flow around PSI, and state transitions. The polypeptide is Cytochrome b6 (Nymphaea alba (White water-lily)).